A 438-amino-acid chain; its full sequence is Phosphoribosylamine--glycine ligase (438 aa).

Residues 108–316 form the ATP-grasp domain; that stretch reads REFMERNNIP…LLEIAKGIVE (209 aa). 135–194 is an ATP binding site; sequence IDEYGKPVVVKPLGLTGGKGVKVVGYQLKDNEEAKEYAEHIIRKDGKVLIEERTDGVEFT. Residues Gln274, Glu286, and Asn288 each coordinate Mg(2+). 3 residues coordinate Mn(2+): Gln274, Glu286, and Asn288.

It belongs to the GARS family. Requires Mg(2+) as cofactor. Mn(2+) serves as cofactor.

The enzyme catalyses 5-phospho-beta-D-ribosylamine + glycine + ATP = N(1)-(5-phospho-beta-D-ribosyl)glycinamide + ADP + phosphate + H(+). It functions in the pathway purine metabolism; IMP biosynthesis via de novo pathway; N(1)-(5-phospho-D-ribosyl)glycinamide from 5-phospho-alpha-D-ribose 1-diphosphate: step 2/2. The chain is Phosphoribosylamine--glycine ligase from Pyrococcus horikoshii (strain ATCC 700860 / DSM 12428 / JCM 9974 / NBRC 100139 / OT-3).